The chain runs to 74 residues: Mu-Sparatoxin-Hp2 (74 aa).

A signal peptide spans 1 to 20 (MKIIVLMMMLFAAFSAVVLA). Positions 21-35 (DKSIEDAALDTVMDR) are excised as a propeptide. Disulfide bonds link cysteine 42–cysteine 57, cysteine 49–cysteine 62, and cysteine 56–cysteine 66. Leucine 73 bears the Leucine amide mark.

In terms of tissue distribution, expressed by the venom gland.

The protein resides in the secreted. Weakly nhibits voltage-gated sodium channels Nav1.7/SCN9A. High concentration of the toxin (3 uM) inhibits Nav1.7/SCN9A currents by 80%. The sequence is that of Mu-Sparatoxin-Hp2 from Heteropoda pingtungensis (Pingtung huntsman spider).